We begin with the raw amino-acid sequence, 242 residues long: Uridylate kinase (242 aa).

16–19 (KVSG) is an ATP binding site. Gly58 provides a ligand contact to UMP. ATP-binding residues include Gly59 and Arg63. Residues Asp78 and 139-146 (TGNPFCTT) each bind UMP. 4 residues coordinate ATP: Thr166, Gln167, Tyr172, and Asp175.

This sequence belongs to the UMP kinase family. Homohexamer.

The protein localises to the cytoplasm. It carries out the reaction UMP + ATP = UDP + ADP. Its pathway is pyrimidine metabolism; CTP biosynthesis via de novo pathway; UDP from UMP (UMPK route): step 1/1. Its activity is regulated as follows. Inhibited by UTP. Its function is as follows. Catalyzes the reversible phosphorylation of UMP to UDP. This is Uridylate kinase from Rickettsia canadensis (strain McKiel).